The primary structure comprises 475 residues: FAD-dependent monooxygenase sdgC (475 aa).

Residues 1–23 (MDKRSFKVIVVGGSIAGLTLAHS) form the signal peptide. Residues E35, G49, and R126 each coordinate FAD. N-linked (GlcNAc...) asparagine glycosylation occurs at N236. A330 is an FAD binding site. A helical membrane pass occupies residues 446–466 (ISGVLLLVIPIIALVYGYSVI).

It belongs to the paxM FAD-dependent monooxygenase family. The cofactor is FAD.

It is found in the membrane. It functions in the pathway secondary metabolite biosynthesis. In terms of biological role, FAD-dependent monooxygenase; part of the gene cluster that mediates the biosynthesis of the polyenes aspernidgulenes. The carbon backbone of aspernidgulenes is synthesized by the HR-PKS sdgA, which accepts acetyl-CoA as the starter unit and performs malonyl-CoA extensions as well as regioselective methylation and reduction. The resulting nonaketide offloads the HR-PKS by intramolecular lactonization to yield the 5,6-dihydro-alpha-pyrone-containing hexaenoic acids preaspernidgulene A1 and A2. The FAD-dependent monooxygenase sdgC then installs the first epoxide on the penultimate double bond. Subsequently, the FAD-dependent monooxygenase sdgF presumably generates a ketone intermediate through Meinwald rearrangement involving a hydride shift. Next, sdgC introduces another epoxide on the last olefin of the ketone intermediate after E/Z isomerization. The epoxide hydrolase sdgD then catalyzes stereospecific cyclization of the 5,6-dihydro-alpha-pyrone and opening of the epoxide ring to form an oxygenated trimethylcyclopentanone and an oxabicyclo[2.2.1]heptane unit. Finally, the bicyclic unit undergoes hydrolytic cleavage, either spontaneously or catalyzed by sdgD, to assemble the dimethyl-gamma-lactone moiety in aspernidgulene A1. The sequence is that of FAD-dependent monooxygenase sdgC from Emericella nidulans (strain FGSC A4 / ATCC 38163 / CBS 112.46 / NRRL 194 / M139) (Aspergillus nidulans).